The sequence spans 786 residues: Phenylalanine--tRNA ligase beta subunit (786 aa).

A tRNA-binding domain is found at 39–150 (LRAPDRVVVG…GELKLGKPLH (112 aa)). Residues 397-474 (YKPATITVDL…RLLGIDTILA (78 aa)) enclose the B5 domain. Mg(2+) is bound by residues D452, D458, E461, and E462. In terms of domain architecture, FDX-ACB spans 693 to 786 (SKFPKLQRDL…LNHRFGAKLR (94 aa)).

Belongs to the phenylalanyl-tRNA synthetase beta subunit family. Type 1 subfamily. Tetramer of two alpha and two beta subunits. Requires Mg(2+) as cofactor.

Its subcellular location is the cytoplasm. The enzyme catalyses tRNA(Phe) + L-phenylalanine + ATP = L-phenylalanyl-tRNA(Phe) + AMP + diphosphate + H(+). This chain is Phenylalanine--tRNA ligase beta subunit, found in Wolinella succinogenes (strain ATCC 29543 / DSM 1740 / CCUG 13145 / JCM 31913 / LMG 7466 / NCTC 11488 / FDC 602W) (Vibrio succinogenes).